A 551-amino-acid chain; its full sequence is Arginine--tRNA ligase (551 aa).

A 'HIGH' region motif is present at residues 125–135 (ANPTGPLHIGH).

Belongs to the class-I aminoacyl-tRNA synthetase family. In terms of assembly, monomer.

It is found in the cytoplasm. It carries out the reaction tRNA(Arg) + L-arginine + ATP = L-arginyl-tRNA(Arg) + AMP + diphosphate. The chain is Arginine--tRNA ligase from Nitratidesulfovibrio vulgaris (strain ATCC 29579 / DSM 644 / CCUG 34227 / NCIMB 8303 / VKM B-1760 / Hildenborough) (Desulfovibrio vulgaris).